The primary structure comprises 107 residues: uncharacterized protein (107 aa).

Positions 1–20 are cleaved as a signal peptide; it reads MYIKGRLIFFFVVLVIALCS.

This is an uncharacterized protein from Listeria monocytogenes serovar 1/2a (strain ATCC BAA-679 / EGD-e).